We begin with the raw amino-acid sequence, 80 residues long: Acyl carrier protein (80 aa).

Residues 2–77 (SEINQKVVDI…QVVEYLEKRL (76 aa)) form the Carrier domain. At serine 37 the chain carries O-(pantetheine 4'-phosphoryl)serine.

Belongs to the acyl carrier protein (ACP) family. In terms of processing, 4'-phosphopantetheine is transferred from CoA to a specific serine of apo-ACP by AcpS. This modification is essential for activity because fatty acids are bound in thioester linkage to the sulfhydryl of the prosthetic group.

Its subcellular location is the cytoplasm. Its pathway is lipid metabolism; fatty acid biosynthesis. Functionally, carrier of the growing fatty acid chain in fatty acid biosynthesis. The polypeptide is Acyl carrier protein (Amoebophilus asiaticus (strain 5a2)).